A 526-amino-acid chain; its full sequence is Transcription factor MYC1 (526 aa).

A disordered region spans residues 330–351 (MFPSQNSGLNQDDPSDRRKENE). A compositionally biased stretch (polar residues) spans 332–341 (PSQNSGLNQD). Positions 333–382 (SQNSGLNQDDPSDRRKENEKFSVLRTMVPTVNEVDKESILNNTIKYLQEL) constitute a bHLH domain.

As to quaternary structure, homodimer. Interacts with MYB75/PAP1, MYB90/PAP2, MYB4, MYB5, MYB6, MYB23, MYB82, MYB113, MYB114, TT2, MYB0/GL1, and MYB66/WER. Mostly expressed in developing seeds. Also detected in stems and leaves.

It is found in the nucleus. In terms of biological role, trancsription activator, when associated with MYB75/PAP1 or MYB90/PAP2. The polypeptide is Transcription factor MYC1 (BHLH12) (Arabidopsis thaliana (Mouse-ear cress)).